Consider the following 416-residue polypeptide: MAKEGGRTAPCCSRPKVAALTVGTLLFLTGIGAASWAIVTILLRSDQEPLYQVQLSPGDSRLLVLDKTEGTWRLLCSSRSNARVAGLGCEEMGFLRALAHSELDVRTAGANGTSGFFCVDEGGLPLAQRLLDVISVCDCPRGRFLTATCQDCGRRKLPVDRIVGGQDSSLGRWPWQVSLRYDGTHLCGGSLLSGDWVLTAAHCFPERNRVLSRWRVFAGAVARTSPHAVQLGVQAVIYHGGYLPFRDPTIDENSNDIALVHLSSSLPLTEYIQPVCLPAAGQALVDGKVCTVTGWGNTQFYGQQAVVLQEARVPIISNEVCNSPDFYGNQIKPKMFCAGYPEGGIDACQGDSGGHFVCEDRISGTSRWRLCGIVSWGTGCALARKPGVYTKVIDFREWIFQAIKTHSEATGMVTQP.

At 1 to 18 the chain is on the cytoplasmic side; the sequence is MAKEGGRTAPCCSRPKVA. Residues 19–39 traverse the membrane as a helical; Signal-anchor for type II membrane protein segment; sequence ALTVGTLLFLTGIGAASWAIV. Residues 40-416 are Extracellular-facing; that stretch reads TILLRSDQEP…SEATGMVTQP (377 aa). The SRCR domain occupies 53 to 150; sequence VQLSPGDSRL…RGRFLTATCQ (98 aa). Cystine bridges form between cysteine 76–cysteine 139, cysteine 89–cysteine 149, cysteine 118–cysteine 137, cysteine 152–cysteine 276, cysteine 187–cysteine 203, cysteine 290–cysteine 358, cysteine 321–cysteine 337, and cysteine 348–cysteine 380. The N-linked (GlcNAc...) asparagine glycan is linked to asparagine 111. In terms of domain architecture, Peptidase S1 spans 162–404; that stretch reads IVGGQDSSLG…FREWIFQAIK (243 aa). Catalysis depends on charge relay system residues histidine 202 and aspartate 256. Serine 352 (charge relay system) is an active-site residue.

This sequence belongs to the peptidase S1 family. In terms of tissue distribution, widely expressed. Present in brain, heart, kidney, liver, stomach, muscle, lung, testis, skin and eye. Not expressed in ovary and thynus. In inner ear tissues, expressed in stria vascularis, modiolus, organ of Corti and spiral ganglion.

It localises to the cell membrane. The protein localises to the apical cell membrane. The catalysed reaction is Cleavage after basic amino-acid residues, with Arg strongly preferred to Lys.. In terms of biological role, serine protease that cleaves extracellular substrates, and contributes to the proteolytic processing of growth factors, such as HGF and MST1/HGFL. Plays a role in cell growth and maintenance of cell morphology. Plays a role in the proteolytic processing of ACE2. Mediates the proteolytic cleavage of urinary UMOD that is required for UMOD polymerization. This is Serine protease hepsin (Hpn) from Rattus norvegicus (Rat).